The chain runs to 413 residues: Gamma-glutamyl phosphate reductase (413 aa).

This sequence belongs to the gamma-glutamyl phosphate reductase family.

The protein resides in the cytoplasm. The catalysed reaction is L-glutamate 5-semialdehyde + phosphate + NADP(+) = L-glutamyl 5-phosphate + NADPH + H(+). It functions in the pathway amino-acid biosynthesis; L-proline biosynthesis; L-glutamate 5-semialdehyde from L-glutamate: step 2/2. Functionally, catalyzes the NADPH-dependent reduction of L-glutamate 5-phosphate into L-glutamate 5-semialdehyde and phosphate. The product spontaneously undergoes cyclization to form 1-pyrroline-5-carboxylate. The sequence is that of Gamma-glutamyl phosphate reductase from Leuconostoc mesenteroides subsp. mesenteroides (strain ATCC 8293 / DSM 20343 / BCRC 11652 / CCM 1803 / JCM 6124 / NCDO 523 / NBRC 100496 / NCIMB 8023 / NCTC 12954 / NRRL B-1118 / 37Y).